The sequence spans 488 residues: Protein nucleotidyltransferase YdiU (488 aa).

Residues G91, G93, R94, K114, D126, G127, R177, and R184 each contribute to the ATP site. The tract at residues 108–127 (RFDIQLKGSGPTPYSRRGDG) is disordered. Catalysis depends on D253, which acts as the Proton acceptor. Mg(2+)-binding residues include N254 and D263. D263 lines the ATP pocket.

It belongs to the SELO family. The cofactor is Mg(2+). It depends on Mn(2+) as a cofactor.

It carries out the reaction L-seryl-[protein] + ATP = 3-O-(5'-adenylyl)-L-seryl-[protein] + diphosphate. It catalyses the reaction L-threonyl-[protein] + ATP = 3-O-(5'-adenylyl)-L-threonyl-[protein] + diphosphate. The catalysed reaction is L-tyrosyl-[protein] + ATP = O-(5'-adenylyl)-L-tyrosyl-[protein] + diphosphate. The enzyme catalyses L-histidyl-[protein] + UTP = N(tele)-(5'-uridylyl)-L-histidyl-[protein] + diphosphate. It carries out the reaction L-seryl-[protein] + UTP = O-(5'-uridylyl)-L-seryl-[protein] + diphosphate. It catalyses the reaction L-tyrosyl-[protein] + UTP = O-(5'-uridylyl)-L-tyrosyl-[protein] + diphosphate. Its function is as follows. Nucleotidyltransferase involved in the post-translational modification of proteins. It can catalyze the addition of adenosine monophosphate (AMP) or uridine monophosphate (UMP) to a protein, resulting in modifications known as AMPylation and UMPylation. This chain is Protein nucleotidyltransferase YdiU, found in Bacillus cereus (strain AH820).